Reading from the N-terminus, the 96-residue chain is UPF0102 protein ML1607 (96 aa).

The protein belongs to the UPF0102 family.

This is UPF0102 protein ML1607 from Mycobacterium leprae (strain TN).